We begin with the raw amino-acid sequence, 409 residues long: Fructose-1,6-bisphosphatase, chloroplastic (409 aa).

A chloroplast-targeting transit peptide spans 1–49; the sequence is MAAATTTTSRPLLLSRQQAAASSLQCRLPRRPGSSLFAGQGQASTPNVR. Residues E131, E160, D181, L183, and D184 each contribute to the Mg(2+) site. 184-187 lines the substrate pocket; it reads DGSS. A disulfide bridge connects residues C223 and C228. Positions 287, 319, 337, 339, and 349 each coordinate substrate. E355 contacts Mg(2+).

Belongs to the FBPase class 1 family. In terms of assembly, homotetramer. Mg(2+) is required as a cofactor. In terms of tissue distribution, in photosynthetically active tissues, and in the shoot and root apical meristems.

The protein localises to the plastid. It localises to the chloroplast. The catalysed reaction is beta-D-fructose 1,6-bisphosphate + H2O = beta-D-fructose 6-phosphate + phosphate. The protein operates within carbohydrate biosynthesis; Calvin cycle. In Triticum aestivum (Wheat), this protein is Fructose-1,6-bisphosphatase, chloroplastic (FBP).